The sequence spans 356 residues: Putative transposase y4zB (356 aa).

Residues 1 to 19 (MITTGTPTTRRSAAGTAGA) show a composition bias toward low complexity. Disordered stretches follow at residues 1 to 54 (MITT…PLAD) and 334 to 356 (PPPV…FAYV).

It belongs to the transposase 11 family.

The sequence is that of Putative transposase y4zB from Sinorhizobium fredii (strain NBRC 101917 / NGR234).